The sequence spans 228 residues: ATP synthase subunit a (228 aa).

6 helical membrane-spanning segments follow: residues 19 to 39 (AIYIFHFLLVVAITMFIAVAV), 81 to 101 (LIATIGFIVFLSNIIGLIPGF), 107 to 127 (SLNLTLSLTLCVFFYYHFEGI), 136 to 156 (FAGFCGPVKAIAPFMFVIEVI), 178 to 198 (LFLLVMLTLAPVLVPMIPYAL), and 204 to 224 (ILQAFIFMVLSYVYLAGAVVV).

The protein belongs to the ATPase A chain family. In terms of assembly, F-type ATPases have 2 components, CF(1) - the catalytic core - and CF(0) - the membrane proton channel. CF(1) has five subunits: alpha(3), beta(3), gamma(1), delta(1), epsilon(1). CF(0) has three main subunits: a(1), b(2) and c(9-12). The alpha and beta chains form an alternating ring which encloses part of the gamma chain. CF(1) is attached to CF(0) by a central stalk formed by the gamma and epsilon chains, while a peripheral stalk is formed by the delta and b chains.

The protein localises to the cell inner membrane. In terms of biological role, key component of the proton channel; it plays a direct role in the translocation of protons across the membrane. This is ATP synthase subunit a from Campylobacter hominis (strain ATCC BAA-381 / DSM 21671 / CCUG 45161 / LMG 19568 / NCTC 13146 / CH001A).